A 187-amino-acid polypeptide reads, in one-letter code: Large ribosomal subunit protein uL5 (187 aa).

This sequence belongs to the universal ribosomal protein uL5 family. In terms of assembly, part of the 50S ribosomal subunit; part of the 5S rRNA/L5/L18/L25 subcomplex. Contacts the 5S rRNA and the P site tRNA. Forms a bridge to the 30S subunit in the 70S ribosome.

Functionally, this is one of the proteins that bind and probably mediate the attachment of the 5S RNA into the large ribosomal subunit, where it forms part of the central protuberance. In the 70S ribosome it contacts protein S13 of the 30S subunit (bridge B1b), connecting the 2 subunits; this bridge is implicated in subunit movement. Contacts the P site tRNA; the 5S rRNA and some of its associated proteins might help stabilize positioning of ribosome-bound tRNAs. In Roseobacter denitrificans (strain ATCC 33942 / OCh 114) (Erythrobacter sp. (strain OCh 114)), this protein is Large ribosomal subunit protein uL5.